A 124-amino-acid polypeptide reads, in one-letter code: Small ribosomal subunit protein uS12cz/uS12cy (124 aa).

This sequence belongs to the universal ribosomal protein uS12 family. As to quaternary structure, part of the 30S ribosomal subunit.

The protein localises to the plastid. In terms of biological role, with S4 and S5 plays an important role in translational accuracy. Located at the interface of the 30S and 50S subunits. The sequence is that of Small ribosomal subunit protein uS12cz/uS12cy (rps12-A) from Epifagus virginiana (Beechdrops).